Reading from the N-terminus, the 131-residue chain is Histone H3-like 4 (131 aa).

K10 is subject to N6,N6,N6-trimethyllysine; alternate. K10 bears the N6,N6-dimethyllysine; alternate mark. Residue K10 is modified to N6-acetyllysine; alternate. Residue K10 is modified to N6-methyllysine; alternate. T12 carries the phosphothreonine modification. Residue K15 is modified to N6-acetyllysine. Residue S27 is modified to Phosphoserine. K32 is modified (N6,N6,N6-trimethyllysine; alternate). K32 carries the post-translational modification N6,N6-dimethyllysine; alternate. An N6-methyllysine; alternate modification is found at K32.

It belongs to the histone H3 family. In terms of assembly, the nucleosome is a histone octamer containing two molecules each of H2A, H2B, H3 and H4 assembled in one H3-H4 heterotetramer and two H2A-H2B heterodimers. The octamer wraps approximately 147 bp of DNA. Expressed in roots, seedlings, leaves buds and open flowers.

It is found in the nucleus. It localises to the chromosome. Core component of nucleosome. Nucleosomes wrap and compact DNA into chromatin, limiting DNA accessibility to the cellular machineries which require DNA as a template. Histones thereby play a central role in transcription regulation, DNA repair, DNA replication and chromosomal stability. DNA accessibility is regulated via a complex set of post-translational modifications of histones, also called histone code, and nucleosome remodeling. The sequence is that of Histone H3-like 4 from Arabidopsis thaliana (Mouse-ear cress).